The primary structure comprises 305 residues: ATP synthase gamma chain (305 aa).

It belongs to the ATPase gamma chain family. In terms of assembly, F-type ATPases have 2 components, CF(1) - the catalytic core - and CF(0) - the membrane proton channel. CF(1) has five subunits: alpha(3), beta(3), gamma(1), delta(1), epsilon(1). CF(0) has three main subunits: a, b and c.

The protein localises to the cell membrane. Produces ATP from ADP in the presence of a proton gradient across the membrane. The gamma chain is believed to be important in regulating ATPase activity and the flow of protons through the CF(0) complex. The polypeptide is ATP synthase gamma chain (Streptomyces coelicolor (strain ATCC BAA-471 / A3(2) / M145)).